The sequence spans 439 residues: Elongation factor 1-alpha 2 (439 aa).

A tr-type G domain is found at 6–229; it reads KDHLNLVVIG…DEFKVPKRPI (224 aa). Residues 15 to 22 form a G1 region; the sequence is GHVDSGKS. GTP is bound at residue 15–22; the sequence is GHVDSGKS. A G2 region spans residues 71–75; the sequence is GITIN. The interval 92 to 95 is G3; sequence DAPG. GTP contacts are provided by residues 92-96 and 154-157; these read DAPGH and NKMD. Residues 154–157 are G4; the sequence is NKMD. The interval 193–195 is G5; the sequence is SGF.

Belongs to the TRAFAC class translation factor GTPase superfamily. Classic translation factor GTPase family. EF-Tu/EF-1A subfamily.

Its subcellular location is the cytoplasm. Its function is as follows. This protein promotes the GTP-dependent binding of aminoacyl-tRNA to the A-site of ribosomes during protein biosynthesis. In Euplotes crassus, this protein is Elongation factor 1-alpha 2 (EFA2).